A 1621-amino-acid polypeptide reads, in one-letter code: MGAAGFLWLLPPLLLAAASYSGAATDQRAGSPASGPPLQPREPLSYSRLQRKSLAVDFVVPSLFRVYARDLLLPQPRSPSEPEAGGLEARGSLALDCEPLLRLLGPLPGISWADGASSPSPEAGPTLSRVLKGGSVRKLRRAKQLVLELGEETILEGCIGPPEEVAAVGILQFNLSELFSWWILHGEGRLRIRLMPEKKASEVGREGRLSSAIRASQPRLLFQIFGTGHSSMESPSETPSPPGTFMWNLTWTMKDSFPFLSHRSRYGLECSFDFPCELEYSPPLHNHGNQSWSWRHVPSEEASRMNLLDGPEAEHSQEMPRGSFLLLNTSADSKHTILSPWMRSSSDHCTLAVSVHRHLQPSGRYVAQLLPHNEAGREILLVPTPGKHGWTVLQGRVGRPANPFRVALEYISSGNRSLSAVDFFALKNCSEGTSPGSKMALQSSFTCWNGTVLQLGQACDFHQDCAQGEDEGQLCSKLPAGFYCNFENGFCGWTQSPLSPHMPRWQVRTLRDAHSQGHQGRALLLSTTDILASEGATVTSATFPAPMKNSPCELRMSWLIRGVLRGNVSLVLVENKTGKEQSRTVWHVATDEGLSLWQHTVLSLLDVTDRFWLQIVTWWGPGSRATVGFDNISISLDCYLTISGEEKMSLNSVPKSRNLFEKNPNKESKSWANISGPTPIFDPTVHWLFTTCGASGPHGPTQAQCNNAYQNSNLSVVVGSEGPLKGVQIWKVPATDTYSISGYGAAGGKGGKNTMMRSHGVSVLGIFNLEKGDTLYILVGQQGEDACPRANQLIQKVCVGENNVIEEEIRVNRSVHEWAGGGGGGGGATYVFKMKDGVPVPLIIAAGGGGRAYGAKTETFHPERLESNSSVLGLNGNSGAAGGGGGWNDNTSLLWAGKSLLEGAAGGHSCPQAMKKWGWETRGGFGGGGGGCSSGGGGGGYIGGNAASNNDPEMDGEDGVSFISPLGILYTPALKVMEGHGEVNIKHYLNCSHCEVDECHMDPESHKVICFCDHGTVLADDGVSCIVSPTPEPHLPLSLILSVVTSALVAALVLAFSGIMIVYRRKHQELQAMQMELQSPEYKLSKLRTSTIMTDYNPNYCFAGKTSSISDLKEVPRKNITLIRGLGHGAFGEVYEGQVSGMPNDPSPLQVAVKTLPEVCSEQDELDFLMEALIISKFNHQNIVRCIGVSLQALPRFILLELMAGGDLKSFLRETRPRPNQPTSLAMLDLLHVARDIACGCQYLEENHFIHRDIAARNCLLTCPGAGRIAKIGDFGMARDIYRASYYRKGGCAMLPVKWMPPEAFMEGIFTSKTDTWSFGVLLWEIFSLGYMPYPSKSNQEVLEFVTSGGRMDPPKNCPGPVYRIMTQCWQHQPEDRPNFAIILERIEYCTQDPDVINTALPIEYGPVVEEEEKVPMRPKDPEGMPPLLVSPQPAKHEEASAAPQPAALTAPGPSVKKPPGAGAGAGAGAGAGPVPRGAADRGHVNMAFSQPNPPPELHKGPGSRNKPTSLWNPTYGSWFTEKPAKKTHPPPGAEPQARAGAAEGGWTGPGAGPRRAEAALLLEPSALSATMKEVPLFRLRHFPCGNVNYGYQQQGLPLEATAAPGDTMLKSKNKVTQPGP.

The signal sequence occupies residues 1 to 18; sequence MGAAGFLWLLPPLLLAAA. The Extracellular portion of the chain corresponds to 19 to 1042; it reads SYSGAATDQR…PHLPLSLILS (1024 aa). The tract at residues 48–70 is heparin-binding region; sequence RLQRKSLAVDFVVPSLFRVYARD. Residues asparagine 174, asparagine 248, asparagine 289, asparagine 328, asparagine 415, asparagine 428, asparagine 449, asparagine 567, asparagine 575, asparagine 631, and asparagine 673 are each glycosylated (N-linked (GlcNAc...) asparagine). The 164-residue stretch at 268-431 folds into the MAM 1 domain; the sequence is LECSFDFPCE…DFFALKNCSE (164 aa). Positions 441–477 constitute an LDL-receptor class A domain; it reads LQSSFTCWNGTVLQLGQACDFHQDCAQGEDEGQLCSK. Positions 482–640 constitute an MAM 2 domain; that stretch reads FYCNFENGFC…NISISLDCYL (159 aa). Cysteine 692 and cysteine 705 are joined by a disulfide. A glycan (N-linked (GlcNAc...) asparagine) is linked at asparagine 713. Cysteine 787 and cysteine 798 are joined by a disulfide. 3 N-linked (GlcNAc...) asparagine glycosylation sites follow: asparagine 812, asparagine 868, and asparagine 890. Cysteine 910 and cysteine 932 are joined by a disulfide. N-linked (GlcNAc...) asparagine glycosylation occurs at asparagine 990. 3 disulfides stabilise this stretch: cysteine 991-cysteine 999, cysteine 994-cysteine 1010, and cysteine 1012-cysteine 1025. Residues 991–1029 form an EGF-like region; it reads CSHCEVDECHMDPESHKVICFCDHGTVLADDGVSCIVSP. A helical transmembrane segment spans residues 1043–1063; sequence VVTSALVAALVLAFSGIMIVY. At 1064–1621 the chain is on the cytoplasmic side; that stretch reads RRKHQELQAM…SKNKVTQPGP (558 aa). Residues tyrosine 1082, tyrosine 1096, and tyrosine 1100 each carry the phosphotyrosine modification. The region spanning 1120-1396 is the Protein kinase domain; it reads ITLIRGLGHG…IEYCTQDPDV (277 aa). ATP is bound by residues 1126-1134 and histidine 1128; that span reads LGHGAFGEV. Tyrosine 1135 is modified (phosphotyrosine). ATP-binding positions include lysine 1154 and 1201 to 1203; that span reads ELM. Aspartate 1253 serves as the catalytic Proton acceptor. Aspartate 1274 contacts ATP. The residue at position 1282 (tyrosine 1282) is a Phosphotyrosine. The segment at 1412–1556 is disordered; the sequence is EEKVPMRPKD…WTGPGAGPRR (145 aa). The span at 1414-1423 shows a compositional bias: basic and acidic residues; sequence KVPMRPKDPE. Residues 1441 to 1461 show a composition bias toward low complexity; the sequence is SAAPQPAALTAPGPSVKKPPG. The span at 1462-1472 shows a compositional bias: gly residues; it reads AGAGAGAGAGA. Over residues 1506–1518 the composition is skewed to polar residues; it reads NKPTSLWNPTYGS. Position 1516 is a phosphotyrosine (tyrosine 1516). The span at 1543–1552 shows a compositional bias: gly residues; it reads AEGGWTGPGA.

This sequence belongs to the protein kinase superfamily. Tyr protein kinase family. Insulin receptor subfamily. Homodimer; homodimerizes following heparin- and ligand-binding. Interacts with CBL, IRS1, PIK3R1 and PLCG1. Interacts with FRS2 and SHC1. Interacts with PTN and MDK. In terms of processing, phosphorylated at tyrosine residues by autocatalysis, which activates kinase activity. In cells not stimulated by a ligand, receptor protein tyrosine phosphatase beta and zeta complex (PTPRB/PTPRZ1) dephosphorylates ALK at the sites in ALK that are undergoing autophosphorylation through autoactivation. As to expression, mainly expressed in central nervous system (CNS) and other parts of the brain such as the paraventricular nucleus (PVN) of the hypothalamus. Expression is also found in peripheral nervous systems, eye, nasal epithelium, olfactory nerve, tongue, skin, tissue surrounding the esophagus, stomach, midgut, as well as testis and ovary.

It is found in the cell membrane. The catalysed reaction is L-tyrosyl-[protein] + ATP = O-phospho-L-tyrosyl-[protein] + ADP + H(+). Activated upon ALKAL2 ligand-binding. ALKAL2-driven activation is coupled with heparin-binding. Following ligand-binding, homodimerizes and autophosphorylates, activating its kinase activity. Inactivated through dephosphorylation by receptor protein tyrosine phosphatase beta and zeta complex (PTPRB/PTPRZ1) when there is no stimulation by a ligand. Functionally, neuronal receptor tyrosine kinase that is essentially and transiently expressed in specific regions of the central and peripheral nervous systems and plays an important role in the genesis and differentiation of the nervous system. Also acts as a key thinness protein involved in the resistance to weight gain: in hypothalamic neurons, controls energy expenditure acting as a negative regulator of white adipose tissue lipolysis and sympathetic tone to fine-tune energy homeostasis. Following activation by ALKAL2 ligand at the cell surface, transduces an extracellular signal into an intracellular response. In contrast, ALKAL1 is not a potent physiological ligand for ALK. Ligand-binding to the extracellular domain induces tyrosine kinase activation, leading to activation of the mitogen-activated protein kinase (MAPK) pathway. Phosphorylates almost exclusively at the first tyrosine of the Y-x-x-x-Y-Y motif. Induces tyrosine phosphorylation of CBL, FRS2, IRS1 and SHC1, as well as of the MAP kinases MAPK1/ERK2 and MAPK3/ERK1. ALK activation may also be regulated by pleiotrophin (PTN) and midkine (MDK). PTN-binding induces MAPK pathway activation, which is important for the anti-apoptotic signaling of PTN and regulation of cell proliferation. MDK-binding induces phosphorylation of the ALK target insulin receptor substrate (IRS1), activates mitogen-activated protein kinases (MAPKs) and PI3-kinase, resulting also in cell proliferation induction. Drives NF-kappa-B activation, probably through IRS1 and the activation of the AKT serine/threonine kinase. Recruitment of IRS1 to activated ALK and the activation of NF-kappa-B are essential for the autocrine growth and survival signaling of MDK. This chain is ALK tyrosine kinase receptor, found in Mus musculus (Mouse).